The chain runs to 365 residues: Green-sensitive opsin P521 (365 aa).

Over 1–51 (MTEAWNVAVFAARRSRDDDDTTRGSVFTYTNTNNTRGPFEGPNYHIAPRWV) the chain is Extracellular. The N-linked (GlcNAc...) asparagine glycan is linked to Asn33. A helical membrane pass occupies residues 52-76 (YNLVSFFMIIVVIASCFTNGLVLVA). Residues 77–88 (TAKFKKLRHPLN) are Cytoplasmic-facing. The chain crosses the membrane as a helical span at residues 89–113 (WILVNLAFVDLVETLVASTISVFNQ). Over 114–128 (IFGYFILGHPLCVIE) the chain is Extracellular. Residues Cys125 and Cys202 are joined by a disulfide bond. The helical transmembrane segment at 129–148 (GYVVSSCGITGLWSLAIISW) threads the bilayer. Topologically, residues 149-167 (ERWFVVCKPFGNIKFDSKL) are cytoplasmic. A helical transmembrane segment spans residues 168-191 (AIIGIVFSWVWAWGWSAPPIFGWS). Over 192-217 (RYWPHGLKTSCGPDVFSGSVELGCQS) the chain is Extracellular. Residues 218 to 245 (FMLTLMITCCFLPLFIIIVCYLQVWMAI) traverse the membrane as a helical segment. Over 246–267 (RAVAAQQKESESTQKAEREVSR) the chain is Cytoplasmic. Residues 268 to 291 (MVVVMIVAFCICWGPYASFVSFAA) form a helical membrane-spanning segment. At 292-299 (ANPGYAFH) the chain is on the extracellular side. The chain crosses the membrane as a helical span at residues 300–324 (PLAAALPAYFAKSATIYNPVIYVFM). The residue at position 311 (Lys311) is an N6-(retinylidene)lysine. At 325–365 (NRQFRNCIMQLFGKKVDDGSEASTTSRTEVSSVSNSSVAPA) the chain is on the cytoplasmic side. Residues 342-365 (DGSEASTTSRTEVSSVSNSSVAPA) are disordered. Positions 345 to 365 (EASTTSRTEVSSVSNSSVAPA) are enriched in low complexity.

This sequence belongs to the G-protein coupled receptor 1 family. Opsin subfamily. In terms of processing, phosphorylated on some or all of the serine and threonine residues present in the C-terminal region. In this lizard the color pigments are found in the rod-shaped photoreceptor cells which have been derived from ancestral cone-like photoreceptors.

The protein resides in the membrane. Visual pigments are the light-absorbing molecules that mediate vision. They consist of an apoprotein, opsin, covalently linked to cis-retinal. The polypeptide is Green-sensitive opsin P521 (Gekko gecko (Tokay gecko)).